The chain runs to 137 residues: Protein Turandot X (137 aa).

A signal peptide spans 1–24; sequence MRVPVFQLSCLLGLIVCLLCSVKA.

It belongs to the Turandot family.

It localises to the secreted. In terms of biological role, a humoral factor that may play a role in stress tolerance. In Drosophila pseudoobscura pseudoobscura (Fruit fly), this protein is Protein Turandot X.